The following is a 320-amino-acid chain: MQTRNAFSCIKEGITRSISISVMIYIIIRAPFSNAYPIFAQQGYENPREATGRIVCANCHLANKPVDIEVPQAVLPDTVFEAVVRIPYDMQVKQVLANGKKGTLNVGAVLILPEGFELAPPDRISPEIKEKIGNLSFQNYRPTKKNILVVGPVPGQKYKEITFPILSPDPASKRDIHFLKYPIYVGGNRGRGQIYLDGSKSNNNVYNATAAGIVKKIIRKEKGGYEITIVDTLDEHEVIDIIPPGPELLVSEGESIKLDQPLTSNPNVGGFGQGDAEIVLQDPLRVQGLLFFLASIILAQIFLVLKKKQFEKVQLFEMNF.

The signal sequence occupies residues 1–35; the sequence is MQTRNAFSCIKEGITRSISISVMIYIIIRAPFSNA. Positions 36, 56, 59, and 60 each coordinate heme. The chain crosses the membrane as a helical span at residues 286-306; it reads VQGLLFFLASIILAQIFLVLK.

Belongs to the cytochrome f family. In terms of assembly, the 4 large subunits of the cytochrome b6-f complex are cytochrome b6, subunit IV (17 kDa polypeptide, petD), cytochrome f and the Rieske protein, while the 4 small subunits are PetG, PetL, PetM and PetN. The complex functions as a dimer. Requires heme as cofactor.

Its subcellular location is the plastid. It is found in the chloroplast thylakoid membrane. In terms of biological role, component of the cytochrome b6-f complex, which mediates electron transfer between photosystem II (PSII) and photosystem I (PSI), cyclic electron flow around PSI, and state transitions. In Phaseolus vulgaris (Kidney bean), this protein is Cytochrome f.